Reading from the N-terminus, the 406-residue chain is Interactor protein for cytohesin exchange factors 1 (406 aa).

The PH domain maps to 13 to 112 (HADCQGWLYK…WLNKLGFAVT (100 aa)). 3 disordered regions span residues 118 to 173 (TKDE…FSSL), 228 to 285 (CRVS…EDDE), and 383 to 406 (PQDP…ENSL). Positions 123–134 (CYSESEQEDPET) are enriched in acidic residues. The span at 144-160 (ASATSSPVAARRASSSS) shows a compositional bias: low complexity. Polar residues predominate over residues 228 to 239 (CRVSENSSTTPE). The span at 243-259 (LNSLSSDDTSSLNNSQD) shows a compositional bias: low complexity. Basic and acidic residues predominate over residues 272–285 (MTDRDEIKSSEDDE). The segment at 285–406 (EMEKLYKSLE…TSSDCVENSL (122 aa)) is necessary for interaction with PSCD2 and to translocate to the plasma membrane. Over residues 392–406 (EIMNPTSSDCVENSL) the composition is skewed to polar residues.

Interacts with guanine-nucleotide exchange factors PSCD1, PSCD2, PSCD3 and PSCD4. Expressed in brain, spleen, lung, testis and kidney.

The protein localises to the cytoplasm. Its subcellular location is the cell membrane. Its function is as follows. Enhances the promotion of guanine-nucleotide exchange by PSCD2 on ARF6 in a concentration-dependent manner. The polypeptide is Interactor protein for cytohesin exchange factors 1 (Ipcef1) (Rattus norvegicus (Rat)).